The sequence spans 936 residues: Isoleucine--tRNA ligase (936 aa).

The short motif at 58–68 is the 'HIGH' region element; sequence PYANGRAHLGT. Residue E561 coordinates L-isoleucyl-5'-AMP. Residues 602-606 carry the 'KMSKS' region motif; the sequence is KMSKS. K605 contacts ATP. C899, C902, C919, and C922 together coordinate Zn(2+).

It belongs to the class-I aminoacyl-tRNA synthetase family. IleS type 1 subfamily. As to quaternary structure, monomer. The cofactor is Zn(2+).

It localises to the cytoplasm. The catalysed reaction is tRNA(Ile) + L-isoleucine + ATP = L-isoleucyl-tRNA(Ile) + AMP + diphosphate. Functionally, catalyzes the attachment of isoleucine to tRNA(Ile). As IleRS can inadvertently accommodate and process structurally similar amino acids such as valine, to avoid such errors it has two additional distinct tRNA(Ile)-dependent editing activities. One activity is designated as 'pretransfer' editing and involves the hydrolysis of activated Val-AMP. The other activity is designated 'posttransfer' editing and involves deacylation of mischarged Val-tRNA(Ile). This is Isoleucine--tRNA ligase from Coxiella burnetii (strain CbuG_Q212) (Coxiella burnetii (strain Q212)).